We begin with the raw amino-acid sequence, 211 residues long: Minor capsid protein VP2 (211 aa).

It belongs to the norovirus VP2 family. In terms of assembly, homooligomer. The portal-like structure consists in 12 copies of VP2. Interacts with capsid protein VP1.

Its subcellular location is the virion. The protein resides in the host cytoplasm. Its function is as follows. Minor structural protein that forms a portal-like structure at a unique three-fold axis of symmetry, following binding to the host receptor. The channel formed by VP2 may allow the delivery of the viral genome through the host endosomal membrane. In Homo sapiens (Human), this protein is Minor capsid protein VP2.